The chain runs to 871 residues: Chaperone protein ClpB 1 (871 aa).

The region spanning 6-147 (PNQFTEKAWA…REAIQQIRGS (142 aa)) is the Clp R domain. Repeat stretches follow at residues 9 to 73 (FTEK…ISRQ) and 84 to 147 (LGQS…IRGS). An NBD1 region spans residues 160–341 (AALEKYGRDL…RRFQQVYVDQ (182 aa)). 207 to 214 (GEPGVGKT) is an ATP binding site. Positions 342 to 550 (PSVEDTISIL…IAEIISKWTG (209 aa)) are linker. Residues 392-526 (IDLVDEAAAK…AEAKLREIQV (135 aa)) are a coiled coil. Residues 560–771 (EAQKLLHLEE…RVDEFIIFHS (212 aa)) are NBD2. 610–617 (GPTGVGKT) serves as a coordination point for ATP. Positions 772–871 (LRKDQLRQIV…FRRQVELATV (100 aa)) are C-terminal.

This sequence belongs to the ClpA/ClpB family. Homohexamer. The oligomerization is ATP-dependent.

It localises to the cytoplasm. Its function is as follows. Part of a stress-induced multi-chaperone system, it is involved in the recovery of the cell from heat-induced damage, in cooperation with DnaK, DnaJ and GrpE. Acts before DnaK, in the processing of protein aggregates. Protein binding stimulates the ATPase activity; ATP hydrolysis unfolds the denatured protein aggregates, which probably helps expose new hydrophobic binding sites on the surface of ClpB-bound aggregates, contributing to the solubilization and refolding of denatured protein aggregates by DnaK. The polypeptide is Chaperone protein ClpB 1 (clpB1) (Thermosynechococcus vestitus (strain NIES-2133 / IAM M-273 / BP-1)).